Consider the following 431-residue polypeptide: MAIKAIHARQIFDSRGNPTVEVDVTTAKGLFRAAVPSGASTGVHEALELRDGPPGYMGKGVLKAVANVNSQIAPNLIKSGINVTDQAAVDKFMLDLDGTPNKEKLGANAILGVSLAXCKAGAAEKGLPLYKYIATLAGNKEVIMPVPSFNVINGGSHAGNKLAMQEFMIMPTGASSFTEAMKIGSEVYHNLRAVIKSKYGLDACNVGDEGGFAPSIQDNLEGLELLRTAIDKAGYTGKVXIAMDCAASEFYKEGKYDLDFKNPKSQASSWITSDAMADVYKKMMSTYPIVSIEDPFDQDDWPAWTKLTGECKIQIVGDDLTVTNPLRVQKAIDQKACNCLLLKVNQIGSVSESIKACKMAQEAGWGVMVSHRSGETEDNFIADLVVGLRTGQIKTGAPCRSERLAKYNQLLRIEEDLGGAAKYAGENFRRP.

Residues His157 and Glu166 each coordinate substrate. The Proton donor role is filled by Glu209. Positions 244, 293, and 318 each coordinate Mg(2+). Residues Glu293 and Asp318 each coordinate substrate. The active-site Proton acceptor is the Lys343. Substrate contacts are provided by residues 370-373 (SHRS) and Lys394.

Belongs to the enolase family. In terms of assembly, homodimer. Requires Mg(2+) as cofactor.

It is found in the cytoplasm. It catalyses the reaction (2R)-2-phosphoglycerate = phosphoenolpyruvate + H2O. The protein operates within carbohydrate degradation; glycolysis; pyruvate from D-glyceraldehyde 3-phosphate: step 4/5. The protein is Enolase (ENO) of Fasciola hepatica (Liver fluke).